The sequence spans 708 residues: Polyribonucleotide nucleotidyltransferase (708 aa).

The Mg(2+) site is built by D488 and D494. One can recognise a KH domain in the interval 555-615 (PIIKVTKVDP…ENVDKAIELI (61 aa)). Residues 625–692 (GEVLEGKVTR…DLGRLQFKRV (68 aa)) form the S1 motif domain.

This sequence belongs to the polyribonucleotide nucleotidyltransferase family. Requires Mg(2+) as cofactor.

Its subcellular location is the cytoplasm. It catalyses the reaction RNA(n+1) + phosphate = RNA(n) + a ribonucleoside 5'-diphosphate. Functionally, involved in mRNA degradation. Catalyzes the phosphorolysis of single-stranded polyribonucleotides processively in the 3'- to 5'-direction. The chain is Polyribonucleotide nucleotidyltransferase from Thermotoga sp. (strain RQ2).